Here is a 173-residue protein sequence, read N- to C-terminus: NADH-ubiquinone oxidoreductase chain 6 (173 aa).

Helical transmembrane passes span 1–21, 27–47, 53–73, 82–102, 106–126, and 141–161; these read MIYF…AVAS, FAAL…VGYG, LVLF…SAAL, WGSW…LLVG, YGWW…MSVL, and GFLL…VLEI.

The protein belongs to the complex I subunit 6 family.

It localises to the mitochondrion membrane. The enzyme catalyses a ubiquinone + NADH + 5 H(+)(in) = a ubiquinol + NAD(+) + 4 H(+)(out). Core subunit of the mitochondrial membrane respiratory chain NADH dehydrogenase (Complex I) that is believed to belong to the minimal assembly required for catalysis. Complex I functions in the transfer of electrons from NADH to the respiratory chain. The immediate electron acceptor for the enzyme is believed to be ubiquinone. The protein is NADH-ubiquinone oxidoreductase chain 6 (MT-ND6) of Latimeria chalumnae (Coelacanth).